The chain runs to 134 residues: Cilia- and flagella-associated protein 144 (134 aa).

The segment at 76–95 (QGPRKKYPETQTENQEVGWD) is disordered.

It belongs to the CFAP144 family. Microtubule inner protein component of sperm flagellar doublet microtubules.

It localises to the cytoplasm. Its subcellular location is the cytoskeleton. The protein localises to the cilium axoneme. The protein resides in the flagellum axoneme. Its function is as follows. Microtubule inner protein (MIP) part of the dynein-decorated doublet microtubules (DMTs) in cilia axoneme, which is required for motile cilia beating. The chain is Cilia- and flagella-associated protein 144 from Homo sapiens (Human).